A 720-amino-acid chain; its full sequence is Engulfment and cell motility protein 3 (720 aa).

The region spanning 307 to 479 (EQREQLQVLR…VVREQLARTL (173 aa)) is the ELMO domain. Positions 542-664 (RLCEGTLFRK…TDGLSALLGS (123 aa)) constitute a PH domain. The short motif at 696–706 (PERPPPVPPPP) is the SH3-binding element.

As to quaternary structure, probably interacts directly with the SH3-domain of DOCK1 via its SH3-binding site. Part of a complex with DOCK1 and RAC1. Interacts with ADGRB3.

The protein resides in the cytoplasm. Functionally, involved in cytoskeletal rearrangements required for phagocytosis of apoptotic cells and cell motility. Acts in association with DOCK1 and CRK. Was initially proposed to be required in complex with DOCK1 to activate Rac Rho small GTPases. May enhance the guanine nucleotide exchange factor (GEF) activity of DOCK1. This chain is Engulfment and cell motility protein 3 (ELMO3), found in Homo sapiens (Human).